The chain runs to 336 residues: DNA-directed RNA polymerase subunit alpha (336 aa).

Positions 1 to 226 are alpha N-terminal domain (alpha-NTD); sequence MLIAQRPTLS…ELFGLARELN (226 aa). The alpha C-terminal domain (alpha-CTD) stretch occupies residues 241–336; it reads AALAADMALP…DDAAFSDDEL (96 aa).

The protein belongs to the RNA polymerase alpha chain family. As to quaternary structure, homodimer. The RNAP catalytic core consists of 2 alpha, 1 beta, 1 beta' and 1 omega subunit. When a sigma factor is associated with the core the holoenzyme is formed, which can initiate transcription.

The catalysed reaction is RNA(n) + a ribonucleoside 5'-triphosphate = RNA(n+1) + diphosphate. Functionally, DNA-dependent RNA polymerase catalyzes the transcription of DNA into RNA using the four ribonucleoside triphosphates as substrates. The polypeptide is DNA-directed RNA polymerase subunit alpha (Paenarthrobacter aurescens (strain TC1)).